The chain runs to 62 residues: Photosystem II reaction center protein Z (62 aa).

A run of 2 helical transmembrane segments spans residues 8 to 28 (AVFALIATSLILLISVPVVFA) and 41 to 61 (FSGTSLWIGLVFLVAILNSLI).

Belongs to the PsbZ family. PSII is composed of 1 copy each of membrane proteins PsbA, PsbB, PsbC, PsbD, PsbE, PsbF, PsbH, PsbI, PsbJ, PsbK, PsbL, PsbM, PsbT, PsbY, PsbZ, Psb30/Ycf12, at least 3 peripheral proteins of the oxygen-evolving complex and a large number of cofactors. It forms dimeric complexes.

It localises to the plastid. It is found in the chloroplast thylakoid membrane. In terms of biological role, may control the interaction of photosystem II (PSII) cores with the light-harvesting antenna, regulates electron flow through the 2 photosystem reaction centers. PSII is a light-driven water plastoquinone oxidoreductase, using light energy to abstract electrons from H(2)O, generating a proton gradient subsequently used for ATP formation. This chain is Photosystem II reaction center protein Z, found in Phalaenopsis aphrodite subsp. formosana (Moth orchid).